Reading from the N-terminus, the 247-residue chain is Uridylate kinase (247 aa).

Residue 18–21 coordinates ATP; sequence KLSG. A UMP-binding site is contributed by Gly-60. Gly-61 and Arg-65 together coordinate ATP. UMP-binding positions include Asp-80 and 141–148; that span reads TGNPFFTT. ATP-binding residues include Thr-168, Tyr-174, and Asp-177.

It belongs to the UMP kinase family. Homohexamer.

Its subcellular location is the cytoplasm. It carries out the reaction UMP + ATP = UDP + ADP. Its pathway is pyrimidine metabolism; CTP biosynthesis via de novo pathway; UDP from UMP (UMPK route): step 1/1. Inhibited by UTP. Its function is as follows. Catalyzes the reversible phosphorylation of UMP to UDP. The chain is Uridylate kinase from Stutzerimonas stutzeri (strain A1501) (Pseudomonas stutzeri).